The chain runs to 156 residues: Endoribonuclease YbeY (156 aa).

Zn(2+) contacts are provided by His-122, His-126, and His-132.

This sequence belongs to the endoribonuclease YbeY family. It depends on Zn(2+) as a cofactor.

Its subcellular location is the cytoplasm. Its function is as follows. Single strand-specific metallo-endoribonuclease involved in late-stage 70S ribosome quality control and in maturation of the 3' terminus of the 16S rRNA. The chain is Endoribonuclease YbeY from Geobacillus sp. (strain WCH70).